The sequence spans 345 residues: Uroporphyrinogen decarboxylase (345 aa).

Residues 30–34 (RQAGR), aspartate 79, tyrosine 154, serine 209, and histidine 322 contribute to the substrate site.

Belongs to the uroporphyrinogen decarboxylase family. As to quaternary structure, homodimer.

The protein localises to the cytoplasm. It catalyses the reaction uroporphyrinogen III + 4 H(+) = coproporphyrinogen III + 4 CO2. It participates in porphyrin-containing compound metabolism; protoporphyrin-IX biosynthesis; coproporphyrinogen-III from 5-aminolevulinate: step 4/4. Catalyzes the decarboxylation of four acetate groups of uroporphyrinogen-III to yield coproporphyrinogen-III. The protein is Uroporphyrinogen decarboxylase of Nocardioides sp. (strain ATCC BAA-499 / JS614).